The chain runs to 256 residues: UPF0246 protein Maqu_2499 (256 aa).

The protein belongs to the UPF0246 family.

This is UPF0246 protein Maqu_2499 from Marinobacter nauticus (strain ATCC 700491 / DSM 11845 / VT8) (Marinobacter aquaeolei).